Here is a 233-residue protein sequence, read N- to C-terminus: Phosphoglycolate phosphatase (233 aa).

Catalysis depends on Asp-13, which acts as the Nucleophile. Mg(2+) contacts are provided by Asp-13, Asp-15, and Asp-175.

The protein belongs to the HAD-like hydrolase superfamily. CbbY/CbbZ/Gph/YieH family. Mg(2+) serves as cofactor.

It carries out the reaction 2-phosphoglycolate + H2O = glycolate + phosphate. It participates in organic acid metabolism; glycolate biosynthesis; glycolate from 2-phosphoglycolate: step 1/1. Its function is as follows. Specifically catalyzes the dephosphorylation of 2-phosphoglycolate. Is involved in the dissimilation of the intracellular 2-phosphoglycolate formed during the DNA repair of 3'-phosphoglycolate ends, a major class of DNA lesions induced by oxidative stress. The chain is Phosphoglycolate phosphatase from Agrobacterium fabrum (strain C58 / ATCC 33970) (Agrobacterium tumefaciens (strain C58)).